Reading from the N-terminus, the 469-residue chain is 3-isopropylmalate dehydratase large subunit (469 aa).

Cys-346, Cys-406, and Cys-409 together coordinate [4Fe-4S] cluster.

This sequence belongs to the aconitase/IPM isomerase family. LeuC type 1 subfamily. In terms of assembly, heterodimer of LeuC and LeuD. [4Fe-4S] cluster serves as cofactor.

It catalyses the reaction (2R,3S)-3-isopropylmalate = (2S)-2-isopropylmalate. The protein operates within amino-acid biosynthesis; L-leucine biosynthesis; L-leucine from 3-methyl-2-oxobutanoate: step 2/4. Catalyzes the isomerization between 2-isopropylmalate and 3-isopropylmalate, via the formation of 2-isopropylmaleate. The protein is 3-isopropylmalate dehydratase large subunit of Lysinibacillus sphaericus (strain C3-41).